A 124-amino-acid polypeptide reads, in one-letter code: MRDSKDRFIIRKNRVRAKIAKLSGGCYPRLSVFKSNRHIYAQVIENIGSNKSNTIAAASTLDKDIFTESKYYKCNIQYAKKVGQLLAERANSKGITSVVFDRGGYKYHGVIKALADGAREKLNF.

It belongs to the universal ribosomal protein uL18 family. Part of the 50S ribosomal subunit; part of the 5S rRNA/L5/L18/L25 subcomplex. Contacts the 5S and 23S rRNAs.

This is one of the proteins that bind and probably mediate the attachment of the 5S RNA into the large ribosomal subunit, where it forms part of the central protuberance. This chain is Large ribosomal subunit protein uL18, found in Orientia tsutsugamushi (strain Boryong) (Rickettsia tsutsugamushi).